Here is a 1029-residue protein sequence, read N- to C-terminus: MGPYCAPHPLSLLVQAAALAAALAEGTLPAFLPCELQPHGQVDCNWLFLKSVPHFSAGAPRANVTSLSLISNRIHHLHDSDFVHLSNLRVLNLKWNCPPAGLSPMHFPCRMTIEPNTFLAVPTLEELNLSYNGITTVPALPSSLVSLSLSHTSILVLGPTHFTGLHALRFLYMDGNCYYMNPCPRALEVAPGALLGLGNLTHLSLKYNNLTEVPRRLPPSLDTLLLSYNHIVTLAPEDLANLTALRVLDVGGNCRRCDHARNPCRECPKNFPKLHPDTFSHLSRLEGLVLKDSSLYKLEKDWFRGLGRLQVLDLSENFLYDYITKTTIFNDLTQLRRLNLSFNYHKKVSFAHLHLASSFGSLVSLEKLDMHGIFFRSLTNITLQSLTRLPKLQSLHLQLNFINQAQLSIFGAFPSLLFVDLSDNRISGAATPAAALGEVDSRVEVWRLPRGLAPGPLDAVSSKDFMPSCNLNFTLDLSRNNLVTIQQEMFTRLSRLQCLRLSHNSISQAVNGSQFVPLTSLRVLDLSHNKLDLYHGRSFTELPQLEALDLSYNSQPFSMQGVGHNLSFVAQLPSLRYLSLAHNGIHSRVSQKLSSASLRALDFSGNSLSQMWAEGDLYLCFFKGLRNLVQLDLSENHLHTLLPRHLDNLPKSLRQLRLRDNNLAFFNWSSLTVLPRLEALDLAGNQLKALSNGSLPPGIRLQKLDVSSNSIGFVIPGFFVRATRLIELNLSANALKTVDPSWFGSLAGTLKILDVSANPLHCACGAAFVDFLLERQEAVPGLSRRVTCGSPGQLQGRSIFTQDLRLCLDETLSLDCFGLSLLMVALGLAVPMLHHLCGWDLWYCFHLCLAHLPRRRRQRGEDTLLYDAVVVFDKVQSAVADWVYNELRVQLEERRGRRALRLCLEERDWLPGKTLFENLWASVYSSRKTMFVLDHTDRVSGLLRASFLLAQQRLLEDRKDVVVLVILRPAAYRSRYVRLRQRLCRQSVLLWPHQPSGQGSFWANLGIALTRDNRHFYNRNFCRGPTTAE.

A signal peptide spans 1-24; that stretch reads MGPYCAPHPLSLLVQAAALAAALA. The Extracellular segment spans residues 25 to 815; sequence EGTLPAFLPC…LCLDETLSLD (791 aa). A disulfide bond links C34 and C44. 46–50 lines the DNA pocket; sequence WLFLK. 26 LRR repeats span residues 61 to 84, 86 to 109, 121 to 146, 149 to 165, 166 to 189, 197 to 220, 222 to 241, 242 to 267, 282 to 305, 307 to 331, 332 to 355, 362 to 385, 389 to 412, 414 to 439, 469 to 492, 494 to 517, 518 to 541, 543 to 570, 572 to 596, 598 to 620, 625 to 648, 650 to 673, 674 to 697, 699 to 721, 722 to 745, and 747 to 770; these read RANVTSLSLISNRIHHLHDSDFVH, SNLRVLNLKWNCPPAGLSPMHFPC, VPTLEELNLSYNGITTVPALPSSLVS, LSHTSILVLGPTHFTGL, HALRFLYMDGNCYYMNPCPRALEV, LGNLTHLSLKYNNLTEVPRRLPPS, DTLLLSYNHIVTLAPEDLAN, LTALRVLDVGGNCRRCDHARNPCREC, LSRLEGLVLKDSSLYKLEKDWFRG, GRLQVLDLSENFLYDYITKTTIFND, LTQLRRLNLSFNYHKKVSFAHLHL, LVSLEKLDMHGIFFRSLTNITLQS, LPKLQSLHLQLNFINQAQLSIFGA, PSLLFVDLSDNRISGAATPAAALGEV, CNLNFTLDLSRNNLVTIQQEMFTR, SRLQCLRLSHNSISQAVNGSQFVP, LTSLRVLDLSHNKLDLYHGRSFTE, PQLEALDLSYNSQPFSMQGVGHNLSFVA, LPSLRYLSLAHNGIHSRVSQKLSSA, LRALDFSGNSLSQMWAEGDLYLC, LRNLVQLDLSENHLHTLLPRHLDN, PKSLRQLRLRDNNLAFFNWSSLTV, LPRLEALDLAGNQLKALSNGSLPP, IRLQKLDVSSNSIGFVIPGFFVR, ATRLIELNLSANALKTVDPSWFGS, and AGTLKILDVSANPLHCACGAAFVD. Residue N63 is glycosylated (N-linked (GlcNAc...) asparagine). DNA is bound by residues 71-76 and 94-108; these read SNRIHH and KWNCPPAGLSPMHFP. C97 and C109 are oxidised to a cystine. N128 carries an N-linked (GlcNAc...) asparagine glycan. DNA is bound at residue Y131. The cysteines at positions 177 and 183 are disulfide-linked. 178–180 serves as a coordination point for DNA; sequence YYM. An N-linked (GlcNAc...) asparagine glycan is attached at N199. Y207 is a DNA binding site. 2 N-linked (GlcNAc...) asparagine glycosylation sites follow: N209 and N241. 2 disulfide bridges follow: C254/C267 and C257/C264. C257 carries the S-palmitoyl cysteine lipid modification. R261 contributes to the DNA binding site. The S-palmitoyl cysteine moiety is linked to residue C264. N339 and N380 each carry an N-linked (GlcNAc...) asparagine glycan. A disulfide bridge links C469 with C498. N-linked (GlcNAc...) asparagine glycans are attached at residues N472 and N511. N-linked (GlcNAc...) asparagine glycosylation is present at N565. 2 N-linked (GlcNAc...) asparagine glycosylation sites follow: N667 and N692. N729 carries an N-linked (GlcNAc...) asparagine glycan. 2 disulfide bridges follow: C762–C788 and C764–C807. A helical membrane pass occupies residues 816 to 836; that stretch reads CFGLSLLMVALGLAVPMLHHL. At 837-1029 the chain is on the cytoplasmic side; that stretch reads CGWDLWYCFH…NFCRGPTTAE (193 aa). A TIR domain is found at 864–1009; that stretch reads LLYDAVVVFD…SFWANLGIAL (146 aa).

It belongs to the Toll-like receptor family. Monomer and homodimer. Exists as a monomer in the absence of unmethylated cytidine-phosphate-guanosine (CpG) ligand. Proteolytic processing of an insertion loop (Z-loop) is required for homodimerization upon binding to the unmethylated CpG ligand leading to its activation. Interacts with MYD88 via their respective TIR domains. Interacts with BTK. Interacts (via transmembrane domain) with UNC93B1. Interacts with CD300LH; the interaction may promote full activation of TLR9-triggered innate responses. Interacts with CNPY3 and HSP90B1; this interaction is required for proper folding in the endoplasmic reticulum. Interacts with SMPDL3B. Interacts with CD82; this interaction is essential for TLR9-dependent myddosome formation in response to CpG stimulation. In terms of processing, activated by proteolytic cleavage of the flexible loop between repeats LRR14 and LRR15 within the ectodomain. Cleavage requires UNC93B1. Proteolytically processed by first removing the majority of the ectodomain by either asparagine endopeptidase (AEP) or a cathepsin followed by a trimming event that is solely cathepsin mediated and required for optimal receptor signaling. Post-translationally, palmitoylated by ZDHHC3 in the Golgi regulates TLR9 trafficking from the Golgi to endosomes. Depalmitoylation by PPT1 controls the release of TLR9 from UNC93B1 in endosomes.

The protein resides in the endoplasmic reticulum membrane. Its subcellular location is the endosome. It is found in the lysosome. It localises to the cytoplasmic vesicle. The protein localises to the phagosome. Its function is as follows. Key component of innate and adaptive immunity. TLRs (Toll-like receptors) control host immune response against pathogens through recognition of molecular patterns specific to microorganisms. TLR9 is a nucleotide-sensing TLR which is activated by unmethylated cytidine-phosphate-guanosine (CpG) dinucleotides. Acts via MYD88 and TRAF6, leading to NF-kappa-B activation, cytokine secretion and the inflammatory response. Upon CpG stimulation, induces B-cell proliferation, activation, survival and antibody production. This is Toll-like receptor 9 (TLR9) from Bos taurus (Bovine).